The primary structure comprises 284 residues: uncharacterized protein (284 aa).

The region spanning 4–133 (PLHLFWHRRD…AVHRQWDQLL (130 aa)) is the Photolyase/cryptochrome alpha/beta domain.

This is an uncharacterized protein from Synechococcus sp. (strain PCC 6716).